Consider the following 140-residue polypeptide: Oocyte-expressed protein homolog (140 aa).

A KH; atypical domain is found at 40 to 101; that stretch reads PLVFFLEAWL…AVQRQVKSVL (62 aa).

The protein belongs to the KHDC1 family. Component of the subcortical maternal complex (SCMC), at least composed of NLRP5, KHDC3, OOEP, and TLE6. Within the complex, interacts with NLRP5, KHDC3 and TLE6. As part of the SCMC interacts with the SCMC-associated protein NLRP4F. The SCMC may facilitate translocation of its components between the nuclear and cytoplasmic compartments. Forms a scaffold complex with KHDC3/FILIA, and interacts with BLM and TRIM25 at DNA replication forks.

Its subcellular location is the cytoplasm. It is found in the nucleus. In terms of biological role, component of the subcortical maternal complex (SCMC), a multiprotein complex that plays a key role in early embryonic development. The SCMC complex is a structural constituent of cytoplasmic lattices, which consist in fibrous structures found in the cytoplasm of oocytes and preimplantation embryos. They are required to store maternal proteins critical for embryonic development, such as proteins that control epigenetic reprogramming of the preimplantation embryo, and prevent their degradation or activation. As part of the OOEP-KHDC3 scaffold, recruits BLM and TRIM25 to DNA replication forks, thereby promoting the ubiquitination of BLM by TRIM25, enhancing BLM retainment at replication forks and therefore promoting stalled replication fork restart. Positively regulates the homologous recombination-mediated DNA double-strand break (DSB) repair pathway by regulating ATM activation and RAD51 recruitment to DSBs in oocytes. Thereby contributes to oocyte survival and the resumption and completion of meiosis. The protein is Oocyte-expressed protein homolog (OOEP) of Bos taurus (Bovine).